The chain runs to 245 residues: Probable phosphatase YPTB2019 (245 aa).

Residues histidine 7, histidine 9, histidine 15, histidine 40, glutamate 73, histidine 101, histidine 131, aspartate 192, and histidine 194 each coordinate Zn(2+).

It belongs to the PHP family. As to quaternary structure, homotrimer. Zn(2+) serves as cofactor.

The polypeptide is Probable phosphatase YPTB2019 (Yersinia pseudotuberculosis serotype I (strain IP32953)).